Consider the following 61-residue polypeptide: Temporin-SN3 (61 aa).

The first 22 residues, 1-22 (MFTLKKTLLLLFFLGTINLSLC), serve as a signal peptide directing secretion. Positions 23 to 44 (EEERNAEEERRDGDDEMDVEVK) are cleaved as a propeptide — removed in mature form. Lysine 61 is modified (lysine amide).

It belongs to the frog skin active peptide (FSAP) family. Temporin subfamily. Expressed by the skin glands.

The protein resides in the secreted. Functionally, antimicrobial peptide. Active against some Gram-positive and Gram-negative bacterial strains. Active against fungus C.glabrata 090902 but not against C.albicans ATCC 12231. Shows weak hemolytic activity against human erythrocytes. This chain is Temporin-SN3, found in Sylvirana spinulosa (Fine-spined frog).